The sequence spans 444 residues: UDP-N-acetylmuramate--L-alanine ligase (444 aa).

110–116 (GAHGKTS) is a binding site for ATP.

Belongs to the MurCDEF family.

The protein localises to the cytoplasm. It carries out the reaction UDP-N-acetyl-alpha-D-muramate + L-alanine + ATP = UDP-N-acetyl-alpha-D-muramoyl-L-alanine + ADP + phosphate + H(+). The protein operates within cell wall biogenesis; peptidoglycan biosynthesis. Cell wall formation. The sequence is that of UDP-N-acetylmuramate--L-alanine ligase from Streptococcus pneumoniae (strain CGSP14).